The following is a 152-amino-acid chain: MAKRVQVVLNEDVLSLGKDGDLVEVAPGYARNFLLPFGKAVPVTPAVMKQVGHRRAKQAEHQAAIKQEALDFQTALVTIGRFTVKKQTGEDDVLFGTVTNGDVAEAIETATKKEIDRRNIIVPEIHRTGSYKVQVKLHNEVNAEINLEVVSY.

Belongs to the bacterial ribosomal protein bL9 family.

In terms of biological role, binds to the 23S rRNA. This chain is Large ribosomal subunit protein bL9, found in Prochlorococcus marinus (strain MIT 9313).